A 1267-amino-acid polypeptide reads, in one-letter code: DNA-directed RNA polymerase subunit beta (1267 aa).

The protein belongs to the RNA polymerase beta chain family. The RNAP catalytic core consists of 2 alpha, 1 beta, 1 beta' and 1 omega subunit. When a sigma factor is associated with the core the holoenzyme is formed, which can initiate transcription.

The catalysed reaction is RNA(n) + a ribonucleoside 5'-triphosphate = RNA(n+1) + diphosphate. Its function is as follows. DNA-dependent RNA polymerase catalyzes the transcription of DNA into RNA using the four ribonucleoside triphosphates as substrates. The polypeptide is DNA-directed RNA polymerase subunit beta (rpoB) (Carsonella ruddii (strain PV)).